A 706-amino-acid chain; its full sequence is Protein psiG (706 aa).

The signal sequence occupies residues 1–23; sequence MKIILTLLIILFSLNKNLNFVSS. The Extracellular segment spans residues 24–644; it reads EVTKSRICSI…FVCKPAAIIS (621 aa). Asparagine 95, asparagine 107, asparagine 212, asparagine 296, asparagine 429, asparagine 521, asparagine 532, and asparagine 616 each carry an N-linked (GlcNAc...) asparagine glycan. One can recognise a PA14 domain in the interval 109–253; it reads TLDKSSNIYS…SDYCGVCQGD (145 aa). Residues 645 to 665 form a helical membrane-spanning segment; the sequence is TSVIVGVSVAAAVVAIAIVVA. Residues 666-706 are Cytoplasmic-facing; it reads SKKGYDAWAASNNNSLASLTSNPLYENPTGNGDNPMYQPNS. Residues 687–706 form a disordered region; it reads NPLYENPTGNGDNPMYQPNS. Positions 693–706 are enriched in polar residues; sequence PTGNGDNPMYQPNS.

The protein belongs to the prespore-cell-inducing factor family.

The protein resides in the membrane. The chain is Protein psiG (psiG-1) from Dictyostelium discoideum (Social amoeba).